Here is a 538-residue protein sequence, read N- to C-terminus: Poly [ADP-ribose] polymerase 2 (538 aa).

The 94-residue stretch at 1-94 (MSIINDENGR…RDDEPVPNKY (94 aa)) folds into the WGR domain. The interval 104 to 133 (RQTEKEVKKEEPEPEPKVDEKNTRGRKKRG) is disordered. Over residues 105 to 126 (QTEKEVKKEEPEPEPKVDEKNT) the composition is skewed to basic and acidic residues. One can recognise a PARP alpha-helical domain in the interval 148–285 (VEEVNEKLKE…GSIEASLELK (138 aa)). The region spanning 309-535 (EPVSEEIAGK…VKVDRLTAKE (227 aa)) is the PARP catalytic domain. Positions 357-381 (QEVPKKRGRKSTKTAAPTVPPPTTK) are disordered.

The protein belongs to the ARTD/PARP family.

It localises to the nucleus. The catalysed reaction is NAD(+) + (ADP-D-ribosyl)n-acceptor = nicotinamide + (ADP-D-ribosyl)n+1-acceptor + H(+).. The enzyme catalyses L-aspartyl-[protein] + NAD(+) = 4-O-(ADP-D-ribosyl)-L-aspartyl-[protein] + nicotinamide. It catalyses the reaction L-glutamyl-[protein] + NAD(+) = 5-O-(ADP-D-ribosyl)-L-glutamyl-[protein] + nicotinamide. With respect to regulation, inhibited by N-(6-oxo-5,6-dihydrophenanthridin-2-yl)-N,N-dimethylacetamide HCl (PJ34), 1,5-dihydroxyisoquinoline (DHQ) and 3-aminobenzamide (3AB). Functionally, poly[ADP-ribose] polymerase modifies various nuclear proteins by poly(ADP-ribosyl)ation, a post-translational modification synthesized after DNA damage that appears as an obligatory step in a detection/signaling pathway leading to the reparation of DNA strand breaks and programmed cell death. This is Poly [ADP-ribose] polymerase 2 from Caenorhabditis elegans.